The chain runs to 170 residues: Small ribosomal subunit protein uS9 (170 aa).

Positions 1 to 47 (MAETTPEQPLEEIDIDSYTTESEVPVEGEYTSESMASAFGEPQPAAG) are disordered.

The protein belongs to the universal ribosomal protein uS9 family.

In Streptomyces coelicolor (strain ATCC BAA-471 / A3(2) / M145), this protein is Small ribosomal subunit protein uS9 (rpsI).